The chain runs to 632 residues: ATP-dependent zinc metalloprotease FtsH (632 aa).

The Cytoplasmic portion of the chain corresponds to 1–9; it reads MKPTNEPKK. The chain crosses the membrane as a helical span at residues 10-30; the sequence is PFFQSPIILAVLGGILLIFFL. At 31 to 116 the chain is on the periplasmic side; that stretch reads RSFNSDGSFS…INYSGFSESN (86 aa). Residues 117–137 traverse the membrane as a helical segment; the sequence is FFTDMLGWLMPILVILGLWMF. Topologically, residues 138-632 are cytoplasmic; the sequence is MANRMQKNMG…RLIPLEEQAS (495 aa). Residues alanine 173, 213-217, and histidine 354 contribute to the ATP site; that span reads GTGKT. Histidine 434 is a Zn(2+) binding site. Glutamate 435 is a catalytic residue. Residues histidine 438 and aspartate 511 each coordinate Zn(2+).

The protein in the central section; belongs to the AAA ATPase family. It in the C-terminal section; belongs to the peptidase M41 family. As to quaternary structure, homohexamer. Zn(2+) serves as cofactor.

Its subcellular location is the cell inner membrane. Its function is as follows. Acts as a processive, ATP-dependent zinc metallopeptidase for both cytoplasmic and membrane proteins. Plays a role in the quality control of integral membrane proteins. The protein is ATP-dependent zinc metalloprotease FtsH of Helicobacter pylori (strain ATCC 700392 / 26695) (Campylobacter pylori).